The chain runs to 118 residues: Transmembrane protein 243 (118 aa).

Methionine 1 carries the post-translational modification N-acetylmethionine. A run of 3 helical transmembrane segments spans residues 32-52, 62-82, and 94-114; these read LVVGSLTSLLILVTLISAFVF, IFFAVCISLSSITACILIYWY, and LIYYIIFSIIMLCICANLYFH.

This sequence belongs to the TMEM243 family. As to expression, widely expressed.

The protein localises to the membrane. This Homo sapiens (Human) protein is Transmembrane protein 243 (TMEM243).